The following is a 110-amino-acid chain: Putative pterin-4-alpha-carbinolamine dehydratase (110 aa).

The protein belongs to the pterin-4-alpha-carbinolamine dehydratase family.

It catalyses the reaction (4aS,6R)-4a-hydroxy-L-erythro-5,6,7,8-tetrahydrobiopterin = (6R)-L-erythro-6,7-dihydrobiopterin + H2O. In Vibrio vulnificus (strain CMCP6), this protein is Putative pterin-4-alpha-carbinolamine dehydratase.